The sequence spans 118 residues: Fluoride-specific ion channel FluC 2 (118 aa).

A run of 4 helical transmembrane segments spans residues 1 to 21 (MIEA…RFAI), 33 to 53 (FPIA…YIIG), 55 to 75 (GVTT…FTTF), and 93 to 113 (TFLL…FLGM). Residues glycine 70 and threonine 73 each coordinate Na(+).

This sequence belongs to the fluoride channel Fluc/FEX (TC 1.A.43) family.

The protein localises to the cell membrane. It carries out the reaction fluoride(in) = fluoride(out). Na(+) is not transported, but it plays an essential structural role and its presence is essential for fluoride channel function. Functionally, fluoride-specific ion channel. Important for reducing fluoride concentration in the cell, thus reducing its toxicity. This is Fluoride-specific ion channel FluC 2 from Bacillus cereus (strain ZK / E33L).